The primary structure comprises 339 residues: Biotin synthase (339 aa).

One can recognise a Radical SAM core domain in the interval 55–282; the sequence is NAVQLSTLLS…KAVVRLSAGR (228 aa). The [4Fe-4S] cluster site is built by Cys70, Cys74, and Cys77. [2Fe-2S] cluster is bound by residues Cys114, Cys145, Cys205, and Arg277.

It belongs to the radical SAM superfamily. Biotin synthase family. As to quaternary structure, homodimer. [4Fe-4S] cluster serves as cofactor. [2Fe-2S] cluster is required as a cofactor.

The enzyme catalyses (4R,5S)-dethiobiotin + (sulfur carrier)-SH + 2 reduced [2Fe-2S]-[ferredoxin] + 2 S-adenosyl-L-methionine = (sulfur carrier)-H + biotin + 2 5'-deoxyadenosine + 2 L-methionine + 2 oxidized [2Fe-2S]-[ferredoxin]. The protein operates within cofactor biosynthesis; biotin biosynthesis; biotin from 7,8-diaminononanoate: step 2/2. Functionally, catalyzes the conversion of dethiobiotin (DTB) to biotin by the insertion of a sulfur atom into dethiobiotin via a radical-based mechanism. This chain is Biotin synthase, found in Burkholderia vietnamiensis (strain G4 / LMG 22486) (Burkholderia cepacia (strain R1808)).